The sequence spans 82 residues: Cytochrome b559 subunit alpha (82 aa).

The helical transmembrane segment at 22–36 threads the bilayer; the sequence is VIHSITIPALFIAGW. H24 contacts heme.

It belongs to the PsbE/PsbF family. As to quaternary structure, heterodimer of an alpha subunit and a beta subunit. PSII is composed of 1 copy each of membrane proteins PsbA, PsbB, PsbC, PsbD, PsbE, PsbF, PsbH, PsbI, PsbJ, PsbK, PsbL, PsbM, PsbT, PsbX, PsbY, PsbZ, Psb30/Ycf12, peripheral proteins PsbO, CyanoQ (PsbQ), PsbU, PsbV and a large number of cofactors. It forms dimeric complexes. Heme b serves as cofactor.

The protein localises to the cellular thylakoid membrane. Functionally, this b-type cytochrome is tightly associated with the reaction center of photosystem II (PSII). PSII is a light-driven water:plastoquinone oxidoreductase that uses light energy to abstract electrons from H(2)O, generating O(2) and a proton gradient subsequently used for ATP formation. It consists of a core antenna complex that captures photons, and an electron transfer chain that converts photonic excitation into a charge separation. The protein is Cytochrome b559 subunit alpha of Trichodesmium erythraeum (strain IMS101).